Consider the following 61-residue polypeptide: Mu-diguetoxin-Dc1c (61 aa).

Cystine bridges form between cysteine 12–cysteine 25, cysteine 19–cysteine 39, and cysteine 24–cysteine 53.

It belongs to the neurotoxin 26 (DTX) family. Expressed by the venom gland.

It localises to the secreted. In terms of biological role, acts by delaying the inactivation of presynaptic voltage-sensitive sodium channels (Nav). Acts against insects and causes a progressive spastic paralysis. This is Mu-diguetoxin-Dc1c from Diguetia canities (Desert bush spider).